Here is a 130-residue protein sequence, read N- to C-terminus: Small ribosomal subunit protein uS8 (130 aa).

Belongs to the universal ribosomal protein uS8 family. Part of the 30S ribosomal subunit. Contacts proteins S5 and S12.

Its function is as follows. One of the primary rRNA binding proteins, it binds directly to 16S rRNA central domain where it helps coordinate assembly of the platform of the 30S subunit. This is Small ribosomal subunit protein uS8 from Coxiella burnetii (strain RSA 331 / Henzerling II).